A 402-amino-acid polypeptide reads, in one-letter code: Bacillibactin exporter (402 aa).

The next 11 membrane-spanning stretches (helical) occupy residues 4-24 (IIAL…LIPV), 39-59 (VSLI…IAGY), 69-89 (ILLP…FAST), 104-124 (LQGI…GDLF), 162-182 (FVPF…VLFL), 212-232 (WLYT…GVLF), 247-267 (VAKG…SFIA), 278-298 (MKFC…ALWW), 302-322 (FYFL…ALPA), 342-362 (FYNS…AALM), and 368-388 (IIFI…LFTV).

It belongs to the major facilitator superfamily.

The protein resides in the cell membrane. Involved in secretion of bacillibactin. This chain is Bacillibactin exporter (ymfD), found in Bacillus subtilis (strain 168).